The primary structure comprises 142 residues: Universal stress protein C (142 aa).

Belongs to the universal stress protein A family.

The protein resides in the cytoplasm. Required for resistance to DNA-damaging agents. The protein is Universal stress protein C (uspC) of Salmonella typhimurium (strain LT2 / SGSC1412 / ATCC 700720).